Here is an 802-residue protein sequence, read N- to C-terminus: Oleate activated transcription factor 3 (802 aa).

The segment at residues 19 to 47 is a DNA-binding region (zn(2)-C6 fungal-type); that stretch reads CTNCKKRKSKCDRGKPCSNCTRIGIENSC. Over residues 749-768 the composition is skewed to polar residues; it reads TSQQDSLASAGTNRTNNIAT. The tract at residues 749-779 is disordered; the sequence is TSQQDSLASAGTNRTNNIATNSGSGDDGGNG.

It belongs to the OAF3 family.

Its subcellular location is the cytoplasm. It is found in the nucleus. It localises to the mitochondrion. Functionally, transcriptional inhibitor with a significantly increased number of target genes in response to oleate. The polypeptide is Oleate activated transcription factor 3 (OAF3) (Vanderwaltozyma polyspora (strain ATCC 22028 / DSM 70294 / BCRC 21397 / CBS 2163 / NBRC 10782 / NRRL Y-8283 / UCD 57-17) (Kluyveromyces polysporus)).